Here is a 104-residue protein sequence, read N- to C-terminus: Large ribosomal subunit protein bL21 (104 aa).

Belongs to the bacterial ribosomal protein bL21 family. Part of the 50S ribosomal subunit. Contacts protein L20.

Functionally, this protein binds to 23S rRNA in the presence of protein L20. The chain is Large ribosomal subunit protein bL21 from Gluconacetobacter diazotrophicus (strain ATCC 49037 / DSM 5601 / CCUG 37298 / CIP 103539 / LMG 7603 / PAl5).